The primary structure comprises 465 residues: Ribulose bisphosphate carboxylase large chain (465 aa).

Position 4 is an N6,N6,N6-trimethyllysine (Lys4). The substrate site is built by Asn113 and Thr163. Lys165 acts as the Proton acceptor in catalysis. Lys167 is a substrate binding site. Mg(2+) contacts are provided by Lys191, Asp193, and Glu194. Lys191 carries the post-translational modification N6-carboxylysine. His284 acts as the Proton acceptor in catalysis. 3 residues coordinate substrate: Arg285, His317, and Ser369.

Belongs to the RuBisCO large chain family. Type I subfamily. Heterohexadecamer of 8 large chains and 8 small chains; disulfide-linked. The disulfide link is formed within the large subunit homodimers. The cofactor is Mg(2+). The disulfide bond which can form in the large chain dimeric partners within the hexadecamer appears to be associated with oxidative stress and protein turnover.

Its subcellular location is the plastid. The protein localises to the chloroplast. The catalysed reaction is 2 (2R)-3-phosphoglycerate + 2 H(+) = D-ribulose 1,5-bisphosphate + CO2 + H2O. It catalyses the reaction D-ribulose 1,5-bisphosphate + O2 = 2-phosphoglycolate + (2R)-3-phosphoglycerate + 2 H(+). Its function is as follows. RuBisCO catalyzes two reactions: the carboxylation of D-ribulose 1,5-bisphosphate, the primary event in carbon dioxide fixation, as well as the oxidative fragmentation of the pentose substrate in the photorespiration process. Both reactions occur simultaneously and in competition at the same active site. The polypeptide is Ribulose bisphosphate carboxylase large chain (Morella cerifera (Wax myrtle)).